The following is a 146-amino-acid chain: Snaclec 5 (146 aa).

The first 23 residues, 1–23 (MGRFIFISFGLLVVFLSLSGTEA), serve as a signal peptide directing secretion. 3 disulfide bridges follow: cysteine 25–cysteine 36, cysteine 53–cysteine 142, and cysteine 119–cysteine 134. The C-type lectin domain occupies 32-143 (YEGHCYRVFD…CRNYGHFVCK (112 aa)).

This sequence belongs to the snaclec family. Heterodimer; disulfide-linked. Expressed by the venom gland.

The protein localises to the secreted. Its function is as follows. Interferes with one step of hemostasis (modulation of platelet aggregation, or coagulation cascade, for example). This is Snaclec 5 from Echis pyramidum leakeyi (Leakey's carpet viper).